The primary structure comprises 170 residues: dCTP pyrophosphatase 1 (170 aa).

Residues 1–25 form a disordered region; that stretch reads MSTAGDGERGTVGQEDSAAARPFRF. Residue Ser-2 is modified to N-acetylserine. Ser-2 is subject to Phosphoserine. Substrate-binding positions include His-38 and 47-51; that span reads WEQFH. Mg(2+) is bound by residues Glu-63 and Glu-66. Trp-73 is a substrate binding site. The Mg(2+) site is built by Glu-95 and Asp-98. Tyr-102 is a binding site for substrate. Residues 150–170 are disordered; the sequence is SENQAVGAGDPASELRDQAST.

Homotetramer. The cofactor is Mg(2+). In terms of tissue distribution, ubiquitous. Highly expressed in heart, liver, skeletal muscle, cerebellum, brain, and salivary gland.

It is found in the cytoplasm. The protein localises to the cytosol. It carries out the reaction dCTP + H2O = dCMP + diphosphate + H(+). Inhibited by divalent calcium or cadmium ions. Functionally, hydrolyzes deoxynucleoside triphosphates (dNTPs) to the corresponding nucleoside monophosphates. Has a strong preference for dCTP and its analogs including 5-iodo-dCTP and 5-methyl-dCTP for which it may even have a higher efficiency. May protect DNA or RNA against the incorporation of these genotoxic nucleotide analogs through their catabolism. The sequence is that of dCTP pyrophosphatase 1 from Mus musculus (Mouse).